The following is a 238-amino-acid chain: UPF0280 protein Mboo_1274 (238 aa).

Belongs to the UPF0280 family.

In Methanoregula boonei (strain DSM 21154 / JCM 14090 / 6A8), this protein is UPF0280 protein Mboo_1274.